The sequence spans 253 residues: Uridine phosphorylase (253 aa).

It belongs to the PNP/UDP phosphorylase family. In terms of assembly, homohexamer.

The protein resides in the cytoplasm. The enzyme catalyses uridine + phosphate = alpha-D-ribose 1-phosphate + uracil. Its pathway is pyrimidine metabolism; UMP biosynthesis via salvage pathway; uracil from uridine (phosphorylase route): step 1/1. Its function is as follows. Catalyzes the reversible phosphorylytic cleavage of uridine to uracil and ribose-1-phosphate. Shows weak activity towards deoxyuridine and thymidine. The produced molecules are then utilized as carbon and energy sources or in the rescue of pyrimidine bases for nucleotide synthesis. The chain is Uridine phosphorylase from Escherichia coli (strain K12).